The sequence spans 104 residues: Pyrimidine/purine nucleoside phosphorylase (104 aa).

It belongs to the nucleoside phosphorylase PpnP family.

It catalyses the reaction a purine D-ribonucleoside + phosphate = a purine nucleobase + alpha-D-ribose 1-phosphate. The catalysed reaction is adenosine + phosphate = alpha-D-ribose 1-phosphate + adenine. The enzyme catalyses cytidine + phosphate = cytosine + alpha-D-ribose 1-phosphate. It carries out the reaction guanosine + phosphate = alpha-D-ribose 1-phosphate + guanine. It catalyses the reaction inosine + phosphate = alpha-D-ribose 1-phosphate + hypoxanthine. The catalysed reaction is thymidine + phosphate = 2-deoxy-alpha-D-ribose 1-phosphate + thymine. The enzyme catalyses uridine + phosphate = alpha-D-ribose 1-phosphate + uracil. It carries out the reaction xanthosine + phosphate = alpha-D-ribose 1-phosphate + xanthine. Catalyzes the phosphorolysis of diverse nucleosides, yielding D-ribose 1-phosphate and the respective free bases. Can use uridine, adenosine, guanosine, cytidine, thymidine, inosine and xanthosine as substrates. Also catalyzes the reverse reactions. This is Pyrimidine/purine nucleoside phosphorylase from Geotalea daltonii (strain DSM 22248 / JCM 15807 / FRC-32) (Geobacter daltonii).